We begin with the raw amino-acid sequence, 311 residues long: Catechol 1,2-dioxygenase (311 aa).

Tyrosine 164 is a catechol binding site. Fe cation is bound by residues tyrosine 164, tyrosine 200, histidine 224, and histidine 226. Histidine 224–histidine 226 contacts catechol.

The protein belongs to the intradiol ring-cleavage dioxygenase family. In terms of assembly, homodimer. Requires Fe(3+) as cofactor.

The enzyme catalyses catechol + O2 = cis,cis-muconate + 2 H(+). It participates in aromatic compound metabolism; beta-ketoadipate pathway; 5-oxo-4,5-dihydro-2-furylacetate from catechol: step 1/3. The polypeptide is Catechol 1,2-dioxygenase (Acinetobacter baylyi (strain ATCC 33305 / BD413 / ADP1)).